The chain runs to 132 residues: Ribonuclease VapC15 (132 aa).

Positions 1–121 (MIVDTSVWIA…HRDRDYEAIR (121 aa)) constitute a PINc domain. Aspartate 96 contacts Mg(2+). Mn(2+)-binding residues include aspartate 96, aspartate 114, and aspartate 116.

The protein belongs to the PINc/VapC protein family. Crystallizes as a VapB15-VapC15(2) heterotrimer and as a VapB15(2)-VapC15(2) heterotetramer; each toxin pair forms a homodimer which creates a channel in which the antitoxin binds. Mg(2+) serves as cofactor. Requires Mn(2+) as cofactor.

RNase activity inhibited by EDTA. Its function is as follows. Toxic component of a type II toxin-antitoxin (TA) system. Degrades total E.coli RNA, which is partially inhibited by cognate antitoxin VapB15. Upon expression in M.smegmatis inhibits colony formation, which is neutralized by coexpression with VapB15. This is Ribonuclease VapC15 from Mycobacterium tuberculosis (strain ATCC 25618 / H37Rv).